Here is a 119-residue protein sequence, read N- to C-terminus: Large ribosomal subunit protein bL20 (119 aa).

This sequence belongs to the bacterial ribosomal protein bL20 family.

In terms of biological role, binds directly to 23S ribosomal RNA and is necessary for the in vitro assembly process of the 50S ribosomal subunit. It is not involved in the protein synthesizing functions of that subunit. The polypeptide is Large ribosomal subunit protein bL20 (Neisseria gonorrhoeae (strain ATCC 700825 / FA 1090)).